Here is a 324-residue protein sequence, read N- to C-terminus: Acetyl-coenzyme A carboxylase carboxyl transferase subunit alpha (324 aa).

In terms of domain architecture, CoA carboxyltransferase C-terminal spans 44–298; it reads ILQRKLLNLK…KNKIRDQLDF (255 aa).

It belongs to the AccA family. Acetyl-CoA carboxylase is a heterohexamer composed of biotin carboxyl carrier protein (accB), biotin carboxylase (accC) and two subunits each of ACCase subunit alpha (accA) and ACCase subunit beta (accD).

It is found in the plastid. It localises to the chloroplast. The catalysed reaction is N(6)-carboxybiotinyl-L-lysyl-[protein] + acetyl-CoA = N(6)-biotinyl-L-lysyl-[protein] + malonyl-CoA. It participates in lipid metabolism; malonyl-CoA biosynthesis; malonyl-CoA from acetyl-CoA: step 1/1. Component of the acetyl coenzyme A carboxylase (ACC) complex. First, biotin carboxylase catalyzes the carboxylation of biotin on its carrier protein (BCCP) and then the CO(2) group is transferred by the carboxyltransferase to acetyl-CoA to form malonyl-CoA. This Cyanidium caldarium (Red alga) protein is Acetyl-coenzyme A carboxylase carboxyl transferase subunit alpha.